The sequence spans 194 residues: Imidazoleglycerol-phosphate dehydratase (194 aa).

The protein belongs to the imidazoleglycerol-phosphate dehydratase family.

It localises to the cytoplasm. The catalysed reaction is D-erythro-1-(imidazol-4-yl)glycerol 3-phosphate = 3-(imidazol-4-yl)-2-oxopropyl phosphate + H2O. It functions in the pathway amino-acid biosynthesis; L-histidine biosynthesis; L-histidine from 5-phospho-alpha-D-ribose 1-diphosphate: step 6/9. The protein is Imidazoleglycerol-phosphate dehydratase of Listeria welshimeri serovar 6b (strain ATCC 35897 / DSM 20650 / CCUG 15529 / CIP 8149 / NCTC 11857 / SLCC 5334 / V8).